Consider the following 145-residue polypeptide: Antiholin-like protein LrgA (145 aa).

4 helical membrane-spanning segments follow: residues 10-30 (PAHFFHQVIVIALVLFVSKII), 33-53 (FMPIPMPASVIGLVLLFVLLC), 72-92 (NIGLLFVPAGISVVNSLGVIS), and 96-116 (FLIIGLIIVSTILLLICTGYV).

The protein belongs to the CidA/LrgA family. LrgA subfamily.

The protein localises to the cell membrane. Functionally, inhibits the expression or activity of extracellular murein hydrolases by interacting, possibly with LrgB, with the holin-like proteins CidA and/or CidB. The LrgAB and CidAB proteins may affect the proton motive force of the membrane. May be involved in programmed cell death (PCD), possibly triggering PCD in response to antibiotics and environmental stresses. This chain is Antiholin-like protein LrgA, found in Staphylococcus aureus (strain Mu3 / ATCC 700698).